The following is a 566-amino-acid chain: E3 ubiquitin-protein ligase Rnf220 (566 aa).

A Glycyl lysine isopeptide (Lys-Gly) (interchain with G-Cter in SUMO2) cross-link involves residue Lys-277. Positions 277 to 300 (KREGDSPTASPHSSATEDLHHSDR) are disordered. Over residues 291–300 (ATEDLHHSDR) the composition is skewed to basic and acidic residues. The residue at position 390 (Ser-390) is a Phosphoserine. Residues 485–513 (EESAVTTFEALKARVRELERQLSRGDRYK) are a coiled coil. A required for targeting to the cytoplasm region spans residues 514–522 (CLICMDSYS). An RING-type zinc finger spans residues 514 to 553 (CLICMDSYSMPLTSIQCWHVHCEECWLRTLGAKKLCPQCN).

In terms of assembly, interacts with SIN3B. Interacts with CTNNB1 (via Armadillo repeats 2-8). Interacts with USP7 (via MATH domain). Post-translationally, auto-ubiquitinated; leads to proteasomal degradation. As to expression, in the brain, expressed in the hippocampus, telenecephalon and cerebellum. No expression in astro glial cells or in neural progenitor cells.

The protein localises to the cytoplasm. It is found in the nucleus. The enzyme catalyses S-ubiquitinyl-[E2 ubiquitin-conjugating enzyme]-L-cysteine + [acceptor protein]-L-lysine = [E2 ubiquitin-conjugating enzyme]-L-cysteine + N(6)-ubiquitinyl-[acceptor protein]-L-lysine.. Its pathway is protein modification; protein ubiquitination. Its function is as follows. E3 ubiquitin-protein ligase that promotes the ubiquitination and proteasomal degradation of SIN3B. Independently of its E3 ligase activity, acts as a CTNNB1 stabilizer through USP7-mediated deubiquitination of CTNNB1 and promotes Wnt signaling. Plays a critical role in the regulation of nuclear lamina. The sequence is that of E3 ubiquitin-protein ligase Rnf220 (Rnf220) from Mus musculus (Mouse).